A 727-amino-acid chain; its full sequence is Catalase-peroxidase (727 aa).

Positions 1 to 26 are disordered; it reads MDTKVETGGKCPVAHGPAGAKGRGNR. Positions 97–219 form a cross-link, tryptophyl-tyrosyl-methioninium (Trp-Tyr) (with M-245); that stretch reads WHSAGTYRIT…LGAVQMGLIY (123 aa). The active-site Proton acceptor is His98. A cross-link (tryptophyl-tyrosyl-methioninium (Tyr-Met) (with W-97)) is located at residues 219-245; sequence YVNPEGPNGNPDPIAAARDIRETFSRM. Position 260 (His260) interacts with heme b.

The protein belongs to the peroxidase family. Peroxidase/catalase subfamily. In terms of assembly, homodimer or homotetramer. Requires heme b as cofactor. Formation of the three residue Trp-Tyr-Met cross-link is important for the catalase, but not the peroxidase activity of the enzyme.

It catalyses the reaction H2O2 + AH2 = A + 2 H2O. The enzyme catalyses 2 H2O2 = O2 + 2 H2O. In terms of biological role, bifunctional enzyme with both catalase and broad-spectrum peroxidase activity. The chain is Catalase-peroxidase from Allorhizobium ampelinum (strain ATCC BAA-846 / DSM 112012 / S4) (Agrobacterium vitis (strain S4)).